Reading from the N-terminus, the 427-residue chain is Glutamate-1-semialdehyde 2,1-aminomutase (427 aa).

Lys-265 carries the post-translational modification N6-(pyridoxal phosphate)lysine.

Belongs to the class-III pyridoxal-phosphate-dependent aminotransferase family. HemL subfamily. As to quaternary structure, homodimer. Requires pyridoxal 5'-phosphate as cofactor.

It is found in the cytoplasm. The enzyme catalyses (S)-4-amino-5-oxopentanoate = 5-aminolevulinate. It functions in the pathway porphyrin-containing compound metabolism; protoporphyrin-IX biosynthesis; 5-aminolevulinate from L-glutamyl-tRNA(Glu): step 2/2. This chain is Glutamate-1-semialdehyde 2,1-aminomutase, found in Nitratiruptor sp. (strain SB155-2).